The chain runs to 72 residues: MKMMIAVFVSILLLMFSLSSTAMGMETEQQNMEERADMDFTGIAESIIKKIKETNAKPPARFDPATFGENED.

A signal peptide spans 1-24 (MKMMIAVFVSILLLMFSLSSTAMG). 2 consecutive propeptides follow at residues 25-35 (METEQQNMEER) and 61-72 (RFDPATFGENED).

Belongs to the non-disulfide-bridged peptide (NDBP) superfamily. In terms of tissue distribution, expressed by the venom gland.

Its subcellular location is the secreted. Potentiates the hypotensive action of bradykinin (BK) in normotensive rats, and induces a vasorelaxant effect in mesenteric artery rings that is induced by endothelium-dependent release of nitric oxide (NO). Does not inhibit angiotensin converting enzyme (ACE). Shows neither hemolytic activity nor cytotoxicity to normal and cancer cells. Shows moderate antimicrobial activity against the fungi Candida albicans and the filamentous fungus Trichophyton rubrum, as well as against the bacteria C.albicans (MIC=128 ug/mL), C.tropicalis (MIC=128 ug/mL) and Aspergillus flavus (MIC=128 ug/mL). Has no antimicrobial activity against S.aureus, S.epidermidis and P.aeruginosa. The sequence is that of Hypotensin from Tityus stigmurus (Brazilian scorpion).